We begin with the raw amino-acid sequence, 174 residues long: uncharacterized protein (174 aa).

The signal sequence occupies residues 1-31; sequence MCCVYRMNRPASGLTVVFCGKLSGKPGPKSA. The disordered stretch occupies residues 39–59; the sequence is KSGADDGGENPRFFSAGPRTE.

This is an uncharacterized protein from Escherichia coli (strain K12).